The following is a 301-amino-acid chain: uncharacterized protein (301 aa).

A divalent metal cation contacts are provided by Glu-146, Glu-148, and Asp-177.

Belongs to the FAH family.

This is an uncharacterized protein from Staphylococcus saprophyticus subsp. saprophyticus (strain ATCC 15305 / DSM 20229 / NCIMB 8711 / NCTC 7292 / S-41).